A 359-amino-acid chain; its full sequence is Proton-coupled zinc antiporter SLC30A2 (359 aa).

Residues 1–56 (MASRSFFGALWKSEASRIPPVNLPSVELAVQSNHYCHAQKDSGSHPNSEKQRARRK) are Cytoplasmic-facing. The short motif at 34–37 (HYCH) is the Mitochondrial localization signal element. Zn(2+) is bound at residue C36. A helical membrane pass occupies residues 57-77 (LYVASAICLVFMIGEIIGGYL). The Lumenal segment spans residues 78 to 86 (AQSLAIMTD). Residues 87-107 (AAHLLTDFASMLISLFSLWVS) form a helical membrane-spanning segment. Zn(2+) is bound by residues H89 and D93. Topologically, residues 108–123 (SRPATKTMNFGWQRAE) are cytoplasmic. A helical membrane pass occupies residues 124–144 (ILGALLSVLSIWVVTGVLVYL). Over 145 to 159 (AVQRLISGDYEIKGD) the chain is Lumenal. A helical membrane pass occupies residues 160–180 (TMLITSGCAVAVNIIMGLALH). At 181 to 207 (QSGHGHSHGHSHEDSSQQQQNPSVRAA) the chain is on the cytoplasmic side. Residues 208–228 (FIHVVGDLLQSVGVLVAAYII) traverse the membrane as a helical segment. Residues H210 and D214 each coordinate Zn(2+). Over 229 to 236 (YFKPEYKY) the chain is Lumenal. A helical transmembrane segment spans residues 237 to 257 (VDPICTFLFSILVLGTTLTIL). Topologically, residues 258–291 (RDVILVLMEGTPKGVDFTTVKNLLLSVDGVEALH) are cytoplasmic. The Lysosomal targeting motif motif lies at 281–282 (LL). Residue S283 is modified to Phosphoserine. The Zn(2+) site is built by H291, H308, and E342. A helical transmembrane segment spans residues 292–312 (SLHIWALTVAQPVLSVHIAIA). Residues 313–359 (QNVDAQAVLKVARDRLQGKFNFHTMTIQIESYSEDMKSCQECQGPSE) lie on the Lumenal side of the membrane.

The protein belongs to the cation diffusion facilitator (CDF) transporter (TC 2.A.4) family. SLC30A subfamily. Homodimer. Interacts (via lysosomal targeting motif) with AP3D1; in AP-3-mediated transport to lysosomes. Interacts with TMEM163. In terms of processing, phosphorylated at Ser-283. Phosphorylation at Ser-283 prevents localization to lysosomes. Dephosphorylation of Ser-283 which triggers localization to lysosomes, accumulation of zinc into lysosomes and lysosomal-mediated cell death is induced by TNF-alpha. As to expression, detected in intestine, kidney, seminal vesicles and testis.

The protein resides in the cytoplasmic vesicle. It is found in the secretory vesicle membrane. Its subcellular location is the zymogen granule membrane. It localises to the endosome membrane. The protein localises to the lysosome membrane. The protein resides in the mitochondrion inner membrane. The enzyme catalyses Zn(2+)(in) + 2 H(+)(out) = Zn(2+)(out) + 2 H(+)(in). Its function is as follows. Electroneutral proton-coupled antiporter concentrating zinc ions into a variety of intracellular organelles including endosomes, zymogen granules and mitochondria. Thereby, plays a crucial role in cellular zinc homeostasis to confer upon cells protection against its potential cytotoxicity. Regulates the zinc concentration of milk, through the transport of zinc ions into secretory vesicles of mammary cells. By concentrating zinc ions into lysosomes participates to lysosomal-mediated cell death during early mammary gland involution. The sequence is that of Proton-coupled zinc antiporter SLC30A2 from Rattus norvegicus (Rat).